Consider the following 389-residue polypeptide: GTPase Obg (389 aa).

Positions 1–159 constitute an Obg domain; the sequence is MKFVDEAVIR…RSLKLELMLL (159 aa). Residues 122 to 144 are disordered; that stretch reads FHGLGNTRFKSSTNRAPRQKTLG. The 174-residue stretch at 160–333 folds into the OBG-type G domain; the sequence is ADVGLLGMPN…LSLKLIDFIE (174 aa). Residues 166 to 173, 191 to 195, 213 to 216, 283 to 286, and 314 to 316 contribute to the GTP site; these read GMPNAGKS, FTTLV, DIPG, NKTD, and SAY. Residues serine 173 and threonine 193 each contribute to the Mg(2+) site.

This sequence belongs to the TRAFAC class OBG-HflX-like GTPase superfamily. OBG GTPase family. Monomer. Mg(2+) serves as cofactor.

The protein localises to the cytoplasm. In terms of biological role, an essential GTPase which binds GTP, GDP and possibly (p)ppGpp with moderate affinity, with high nucleotide exchange rates and a fairly low GTP hydrolysis rate. Plays a role in control of the cell cycle, stress response, ribosome biogenesis and in those bacteria that undergo differentiation, in morphogenesis control. The polypeptide is GTPase Obg (Shewanella woodyi (strain ATCC 51908 / MS32)).